The primary structure comprises 403 residues: Cysteine desulfurase IscS (403 aa).

Residues 75 to 76 (AT), Asn-155, Gln-183, and 203 to 205 (SAH) each bind pyridoxal 5'-phosphate. An N6-(pyridoxal phosphate)lysine modification is found at Lys-206. Position 243 (Thr-243) interacts with pyridoxal 5'-phosphate. Residue Cys-328 is the Cysteine persulfide intermediate of the active site. Cys-328 lines the [2Fe-2S] cluster pocket.

It belongs to the class-V pyridoxal-phosphate-dependent aminotransferase family. NifS/IscS subfamily. As to quaternary structure, homodimer. Forms a heterotetramer with IscU, interacts with other sulfur acceptors. The cofactor is pyridoxal 5'-phosphate.

The protein resides in the cytoplasm. It carries out the reaction (sulfur carrier)-H + L-cysteine = (sulfur carrier)-SH + L-alanine. The protein operates within cofactor biosynthesis; iron-sulfur cluster biosynthesis. Its function is as follows. Master enzyme that delivers sulfur to a number of partners involved in Fe-S cluster assembly, tRNA modification or cofactor biosynthesis. Catalyzes the removal of elemental sulfur atoms from cysteine to produce alanine. Functions as a sulfur delivery protein for Fe-S cluster synthesis onto IscU, an Fe-S scaffold assembly protein, as well as other S acceptor proteins. In Psychromonas ingrahamii (strain DSM 17664 / CCUG 51855 / 37), this protein is Cysteine desulfurase IscS.